Consider the following 320-residue polypeptide: Cytochrome f (320 aa).

Residues 1-32 (MKTKKSYDKVTRWVTPPILMLIIIHIITGACS) form the signal peptide. Heme contacts are provided by Tyr36, Cys56, Cys59, and His60. Residues 286–306 (IQGLLGFLASVVLAQIFLVLK) form a helical membrane-spanning segment.

This sequence belongs to the cytochrome f family. As to quaternary structure, the 4 large subunits of the cytochrome b6-f complex are cytochrome b6, subunit IV (17 kDa polypeptide, petD), cytochrome f and the Rieske protein, while the 4 small subunits are PetG, PetL, PetM and PetN. The complex functions as a dimer. Heme is required as a cofactor.

It localises to the plastid. It is found in the chloroplast thylakoid membrane. Functionally, component of the cytochrome b6-f complex, which mediates electron transfer between photosystem II (PSII) and photosystem I (PSI), cyclic electron flow around PSI, and state transitions. This Gnetum parvifolium (Small-leaved jointfir) protein is Cytochrome f.